Reading from the N-terminus, the 284-residue chain is MSAKVLNGTELAAKVKAGLKAKIDELKSKGINPGLAVIIVGDDPASRVYVNHKKNDCTEIGIKSFEYALPESTSEEELLDLIETLNNDASVNGILVQLPIPKHINEEKVIAAISPDKDADCFHPMNVGKLMIGKPEFLPCTPAGVVELLEENGIEISGKNCVVVGRSNIVGKPQAILLLAKNATVTICHSKTANIEEVCRSADVLVVAIGKSEFIKPEFVKPGAVVIDVGVSRGADGKLVGDVQFAEVAEIASAITKVTGGVGPMTRAMLMKNTYKAVLLQNGL.

Residues 165–167 (GRS), serine 190, and valine 231 contribute to the NADP(+) site.

This sequence belongs to the tetrahydrofolate dehydrogenase/cyclohydrolase family. Homodimer.

It catalyses the reaction (6R)-5,10-methylene-5,6,7,8-tetrahydrofolate + NADP(+) = (6R)-5,10-methenyltetrahydrofolate + NADPH. The catalysed reaction is (6R)-5,10-methenyltetrahydrofolate + H2O = (6R)-10-formyltetrahydrofolate + H(+). The protein operates within one-carbon metabolism; tetrahydrofolate interconversion. Catalyzes the oxidation of 5,10-methylenetetrahydrofolate to 5,10-methenyltetrahydrofolate and then the hydrolysis of 5,10-methenyltetrahydrofolate to 10-formyltetrahydrofolate. In Ruminiclostridium cellulolyticum (strain ATCC 35319 / DSM 5812 / JCM 6584 / H10) (Clostridium cellulolyticum), this protein is Bifunctional protein FolD.